Here is a 72-residue protein sequence, read N- to C-terminus: Heat-stable enterotoxin C (72 aa).

A signal peptide spans 1–19; it reads MKKIVFVLTLMLFSFGTLG. Disulfide bonds link cysteine 60–cysteine 65, cysteine 61–cysteine 69, and cysteine 64–cysteine 72.

The protein belongs to the heat-stable enterotoxin family.

Its subcellular location is the secreted. Toxin which activates the particulate form of guanylate cyclase and increases cyclic GMP levels within the host intestinal epithelial cells. Highly toxic. In Yersinia enterocolitica, this protein is Heat-stable enterotoxin C (ystC).